The primary structure comprises 496 residues: Aspartyl/glutamyl-tRNA(Asn/Gln) amidotransferase subunit B (496 aa).

It belongs to the GatB/GatE family. GatB subfamily. In terms of assembly, heterotrimer of A, B and C subunits.

The enzyme catalyses L-glutamyl-tRNA(Gln) + L-glutamine + ATP + H2O = L-glutaminyl-tRNA(Gln) + L-glutamate + ADP + phosphate + H(+). It carries out the reaction L-aspartyl-tRNA(Asn) + L-glutamine + ATP + H2O = L-asparaginyl-tRNA(Asn) + L-glutamate + ADP + phosphate + 2 H(+). Functionally, allows the formation of correctly charged Asn-tRNA(Asn) or Gln-tRNA(Gln) through the transamidation of misacylated Asp-tRNA(Asn) or Glu-tRNA(Gln) in organisms which lack either or both of asparaginyl-tRNA or glutaminyl-tRNA synthetases. The reaction takes place in the presence of glutamine and ATP through an activated phospho-Asp-tRNA(Asn) or phospho-Glu-tRNA(Gln). The protein is Aspartyl/glutamyl-tRNA(Asn/Gln) amidotransferase subunit B of Prochlorococcus marinus (strain MIT 9303).